The sequence spans 547 residues: Chaperonin GroEL (547 aa).

Residues 30-33 (TLGP), Lys51, 87-91 (DGTTT), Gly415, and Asp496 contribute to the ATP site.

The protein belongs to the chaperonin (HSP60) family. As to quaternary structure, forms a cylinder of 14 subunits composed of two heptameric rings stacked back-to-back. Interacts with the co-chaperonin GroES.

It localises to the cytoplasm. It carries out the reaction ATP + H2O + a folded polypeptide = ADP + phosphate + an unfolded polypeptide.. In terms of biological role, together with its co-chaperonin GroES, plays an essential role in assisting protein folding. The GroEL-GroES system forms a nano-cage that allows encapsulation of the non-native substrate proteins and provides a physical environment optimized to promote and accelerate protein folding. This Chlorobaculum parvum (strain DSM 263 / NCIMB 8327) (Chlorobium vibrioforme subsp. thiosulfatophilum) protein is Chaperonin GroEL.